The chain runs to 271 residues: Probable redox regulatory protein SCO3349 (271 aa).

2 disordered regions span residues 1–21 and 109–130; these read MPKT…KHIA and AEGT…TRPF. Residues 7 to 21 are compositionally biased toward basic and acidic residues; it reads AKDEKSAKKDKKHIA.

It belongs to the Rv0495c family.

Essential for maintaining intracellular redox homeostasis. This Streptomyces coelicolor (strain ATCC BAA-471 / A3(2) / M145) protein is Probable redox regulatory protein SCO3349.